Reading from the N-terminus, the 165-residue chain is Shikimate kinase (165 aa).

11-16 (GAGKTT) contributes to the ATP binding site. Residue threonine 15 participates in Mg(2+) binding. 3 residues coordinate substrate: aspartate 33, arginine 57, and glycine 78. Residue arginine 116 coordinates ATP. Residue arginine 134 coordinates substrate.

The protein belongs to the shikimate kinase family. Monomer. Mg(2+) serves as cofactor.

It localises to the cytoplasm. The catalysed reaction is shikimate + ATP = 3-phosphoshikimate + ADP + H(+). It functions in the pathway metabolic intermediate biosynthesis; chorismate biosynthesis; chorismate from D-erythrose 4-phosphate and phosphoenolpyruvate: step 5/7. Its function is as follows. Catalyzes the specific phosphorylation of the 3-hydroxyl group of shikimic acid using ATP as a cosubstrate. The chain is Shikimate kinase from Bacillus cytotoxicus (strain DSM 22905 / CIP 110041 / 391-98 / NVH 391-98).